The chain runs to 190 residues: MKEKKGHYVPPSYIPLTQSDADTEVETTTPNLEIAVSESTKDDPRQWSSGICACFDDMQSCCVGLFCPCYIFGKNAELLGSGTFAGPCLTHCISWALVNTICCFATNGALLGLPGCFVSCYACGYRKSLRAKYNLQEAPCGDFVTHFFCHLCAICQEYREIREQSSGSYPLDMKMAITNAPLAQTMESAN.

2 consecutive transmembrane segments (helical) span residues Leu-78–Val-98 and Gly-108–Tyr-125.

It belongs to the cornifelin family.

Its subcellular location is the membrane. Functionally, may be involved in cadmium resistance. The protein is Protein PLANT CADMIUM RESISTANCE 10 (PCR10) of Arabidopsis thaliana (Mouse-ear cress).